A 420-amino-acid polypeptide reads, in one-letter code: S-adenosylmethionine synthase (420 aa).

His-16 serves as a coordination point for ATP. Position 18 (Asp-18) interacts with Mg(2+). K(+) is bound at residue Glu-44. Positions 57 and 100 each coordinate L-methionine. A flexible loop region spans residues 100 to 110 (QSPDIAQGVNT). ATP-binding positions include 175-177 (DGK), 251-252 (KF), Asp-260, 266-267 (RK), Ala-283, and Lys-287. L-methionine is bound at residue Asp-260. Lys-291 is a binding site for L-methionine.

The protein belongs to the AdoMet synthase family. In terms of assembly, homotetramer; dimer of dimers. It depends on Mg(2+) as a cofactor. Requires K(+) as cofactor.

Its subcellular location is the cytoplasm. The catalysed reaction is L-methionine + ATP + H2O = S-adenosyl-L-methionine + phosphate + diphosphate. It participates in amino-acid biosynthesis; S-adenosyl-L-methionine biosynthesis; S-adenosyl-L-methionine from L-methionine: step 1/1. In terms of biological role, catalyzes the formation of S-adenosylmethionine (AdoMet) from methionine and ATP. The overall synthetic reaction is composed of two sequential steps, AdoMet formation and the subsequent tripolyphosphate hydrolysis which occurs prior to release of AdoMet from the enzyme. The protein is S-adenosylmethionine synthase of Trichormus variabilis (strain ATCC 29413 / PCC 7937) (Anabaena variabilis).